A 350-amino-acid polypeptide reads, in one-letter code: MKFSEIISQFGETGTNHSLTSNPDHDPEIIGVAAIDEATNGTLSYVEGPKFGSFVSKTNATALILPQDEKLQELAQENGIVWISTSDPRLLFAKAIALFYQPYRPVPEIHPTAVIHSSAKVGSDVYVGPHVVIQQGVEIGDGAIIHPNVVIYPDTKIGDRTTLHANCTIHERTRIGADCVIHSGAVIGAEGFGFVPSRTGWLKMEQSGYTVLEDGVVVGCNTAIDRPAVGETRVGRNTVIDNLVQIGHGCQIGSGCAIAGQAGMAGGVKLGNRVILAGQTGIANQVKIGDGAIASAQTGIHSDVAPGEIVSGTPAIPYKLYLKVCAVYSRLPDMYQSLKQLQRKFKNSND.

The active-site Proton acceptor is the His-248.

This sequence belongs to the transferase hexapeptide repeat family. LpxD subfamily. Homotrimer.

The catalysed reaction is a UDP-3-O-[(3R)-3-hydroxyacyl]-alpha-D-glucosamine + a (3R)-hydroxyacyl-[ACP] = a UDP-2-N,3-O-bis[(3R)-3-hydroxyacyl]-alpha-D-glucosamine + holo-[ACP] + H(+). The protein operates within bacterial outer membrane biogenesis; LPS lipid A biosynthesis. In terms of biological role, catalyzes the N-acylation of UDP-3-O-acylglucosamine using 3-hydroxyacyl-ACP as the acyl donor. Is involved in the biosynthesis of lipid A, a phosphorylated glycolipid that anchors the lipopolysaccharide to the outer membrane of the cell. This chain is UDP-3-O-acylglucosamine N-acyltransferase, found in Nostoc punctiforme (strain ATCC 29133 / PCC 73102).